Reading from the N-terminus, the 132-residue chain is AP-2 complex subunit sigma (132 aa).

Belongs to the adaptor complexes small subunit family. As to quaternary structure, adaptor protein complex 2 (AP-2) is a heterotetramer composed of two large adaptins (alpha-type and beta-type subunits), a medium adaptin (mu-type subunit AP50) and a small adaptin (sigma-type subunit AP17). Widely expressed in the embryo, endosperm, leaf and root.

The protein resides in the cell membrane. The protein localises to the membrane. It is found in the coated pit. Functionally, component of the adaptor complexes which link clathrin to receptors in coated vesicles. Clathrin-associated protein complexes are believed to interact with the cytoplasmic tails of membrane proteins, leading to their selection and concentration. AP2S1/AP17 is a subunit of the plasma membrane adaptor. The complex binds polyphosphoinositides. The sequence is that of AP-2 complex subunit sigma (AP-17) from Zea mays (Maize).